The chain runs to 127 residues: MFQAAGAAQATPSHDAKGGGSSTVQRSKSFSLRAQVKETCAACQKTVYPMERLVADKLIFHNSCFCCKHCHTKLSLGSYAALHGEFYCKPHFQQLFKSKGNYDEGFGRKQHKELWAHKEVDPGTKTA.

Met-1 is modified (N-acetylmethionine). Residues 1 to 24 form a disordered region; sequence MFQAAGAAQATPSHDAKGGGSSTV. The 61-residue stretch at 38-98 folds into the LIM zinc-binding domain; it reads ETCAACQKTV…KPHFQQLFKS (61 aa). Zn(2+) is bound by residues Cys-40, Cys-43, His-61, Cys-64, Cys-67, Cys-70, Cys-88, and His-91.

As to quaternary structure, interacts with ILK.

The protein localises to the cytoplasm. It localises to the nucleus. Functionally, acts as an activator of the protein-kinase ILK, thereby regulating cell motility. This is LIM domain-containing protein 2 from Homo sapiens (Human).